We begin with the raw amino-acid sequence, 643 residues long: Threonine--tRNA ligase (643 aa).

A TGS domain is found at 3–64 (DVVKITFPDG…EEDGAISIIT (62 aa)). A catalytic region spans residues 245–542 (DHRKLGKELD…LIEEYKGAFP (298 aa)). The Zn(2+) site is built by C338, H389, and H519.

The protein belongs to the class-II aminoacyl-tRNA synthetase family. Homodimer. Requires Zn(2+) as cofactor.

Its subcellular location is the cytoplasm. It catalyses the reaction tRNA(Thr) + L-threonine + ATP = L-threonyl-tRNA(Thr) + AMP + diphosphate + H(+). In terms of biological role, catalyzes the attachment of threonine to tRNA(Thr) in a two-step reaction: L-threonine is first activated by ATP to form Thr-AMP and then transferred to the acceptor end of tRNA(Thr). Also edits incorrectly charged L-seryl-tRNA(Thr). The polypeptide is Threonine--tRNA ligase (Anoxybacillus flavithermus (strain DSM 21510 / WK1)).